Here is a 188-residue protein sequence, read N- to C-terminus: Elongation factor P (188 aa).

Belongs to the elongation factor P family.

The protein resides in the cytoplasm. It participates in protein biosynthesis; polypeptide chain elongation. In terms of biological role, involved in peptide bond synthesis. Stimulates efficient translation and peptide-bond synthesis on native or reconstituted 70S ribosomes in vitro. Probably functions indirectly by altering the affinity of the ribosome for aminoacyl-tRNA, thus increasing their reactivity as acceptors for peptidyl transferase. The sequence is that of Elongation factor P from Caulobacter vibrioides (strain ATCC 19089 / CIP 103742 / CB 15) (Caulobacter crescentus).